Here is an 85-residue protein sequence, read N- to C-terminus: RNA-binding protein Hfq (85 aa).

The Sm domain maps to 10-70 (DAFLNQVRKE…ISTIIPQRPV (61 aa)).

This sequence belongs to the Hfq family. Homohexamer.

In terms of biological role, RNA chaperone that binds small regulatory RNA (sRNAs) and mRNAs to facilitate mRNA translational regulation in response to envelope stress, environmental stress and changes in metabolite concentrations. Also binds with high specificity to tRNAs. The sequence is that of RNA-binding protein Hfq from Carboxydothermus hydrogenoformans (strain ATCC BAA-161 / DSM 6008 / Z-2901).